The chain runs to 120 residues: MASRKDTLVRRASRVRRQIKAVANGRPRLSVHRSSKNIYAQIIDDVAGKTIASASTLDTDLRSSLKTGADTEAATAVGKLLAERASKAGIKDVVFDRGAFIYHGRIKALAEAAREGGLNF.

This sequence belongs to the universal ribosomal protein uL18 family. As to quaternary structure, part of the 50S ribosomal subunit; part of the 5S rRNA/L5/L18/L25 subcomplex. Contacts the 5S and 23S rRNAs.

Functionally, this is one of the proteins that bind and probably mediate the attachment of the 5S RNA into the large ribosomal subunit, where it forms part of the central protuberance. The polypeptide is Large ribosomal subunit protein uL18 (Rhizobium meliloti (strain 1021) (Ensifer meliloti)).